Consider the following 33-residue polypeptide: Mu-theraphotoxin-Tp1a (33 aa).

3 cysteine pairs are disulfide-bonded: cysteine 2/cysteine 17, cysteine 9/cysteine 22, and cysteine 16/cysteine 29. Position 33 is an isoleucine amide (isoleucine 33).

The protein belongs to the neurotoxin 10 (Hwtx-1) family. 55 (ProTx-III) subfamily. As to expression, expressed by the venom gland.

The protein localises to the secreted. Its function is as follows. Inhibits voltage-gated sodium channels without significantly altering the voltage dependence of activation or inactivation. Preferentially inhibits human Nav1.7/SCN9A (IC(50)=2.1 nM) &gt; human Nav1.6/SCN8A &gt; human Nav1.2/SCN2A &gt; human Nav1.1/SCN1A &gt; human Nav1.3/SCN3A channels. Exhibits analgesic properties by reversing spontaneous pain induced in mice by intraplantar injection with OD1 (AC P84646), a scorpion toxin that potentiates human Nav1.7/SCN9A. The polypeptide is Mu-theraphotoxin-Tp1a (Thrixopelma pruriens (Peruvian green velvet tarantula)).